The primary structure comprises 216 residues: uncharacterized protein (216 aa).

In terms of domain architecture, Cupin type-2 spans 125–176 (YPKSTNFDSHYHDCDEYWVIIEGAGTVVVGSRSFEVEVGDCVAIGMGHHHDL).

This is an uncharacterized protein from Sinorhizobium fredii (strain NBRC 101917 / NGR234).